Here is a 288-residue protein sequence, read N- to C-terminus: Glutamate racemase (288 aa).

Residues 10–11 (DS) and 42–43 (YG) each bind substrate. Cys73 (proton donor/acceptor) is an active-site residue. 74–75 (NT) serves as a coordination point for substrate. Cys184 functions as the Proton donor/acceptor in the catalytic mechanism. 185–186 (TH) contributes to the substrate binding site.

This sequence belongs to the aspartate/glutamate racemases family.

The catalysed reaction is L-glutamate = D-glutamate. It participates in cell wall biogenesis; peptidoglycan biosynthesis. In terms of biological role, provides the (R)-glutamate required for cell wall biosynthesis. The protein is Glutamate racemase of Corynebacterium kroppenstedtii (strain DSM 44385 / JCM 11950 / CIP 105744 / CCUG 35717).